Consider the following 486-residue polypeptide: Keratin, type II cuticular Hb6 (486 aa).

Residues 1 to 106 are head; that stretch reads MTCGSYCGGR…PNAQCVKHEE (106 aa). Positions 106-417 constitute an IF rod domain; it reads EKEQIKCLNS…RLLEGEEQRL (312 aa). Residues 107–141 form a coil 1A region; sequence KEQIKCLNSKFAAFIDKVRFLEQQNKLLETKWQFY. A linker 1 region spans residues 142–151; that stretch reads QNRKCCESNM. Residues 152-252 are coil 1B; the sequence is EPLFEGYIEA…YDEETRILHS (101 aa). Lys-212 participates in a covalent cross-link: Glycyl lysine isopeptide (Lys-Gly) (interchain with G-Cter in SUMO1). Positions 253-269 are linker 12; it reads HISDTSIVVKMDNSRDL. The segment at 270-413 is coil 2; sequence NMDCVVAEIK…TTYRRLLEGE (144 aa). The interval 414–486 is tail; it reads EQRLCEGVGS…GACSGGCKKC (73 aa).

The protein belongs to the intermediate filament family. In terms of assembly, heterotetramer of two type I and two type II keratins.

This Mus musculus (Mouse) protein is Keratin, type II cuticular Hb6 (Krt86).